We begin with the raw amino-acid sequence, 383 residues long: Galactokinase (383 aa).

Residue 34 to 37 (EHTD) participates in substrate binding. ATP is bound at residue 124–130 (GAGLSSS). Positions 130 and 162 each coordinate Mg(2+). D174 serves as the catalytic Proton acceptor. Residue Y223 participates in substrate binding.

The protein belongs to the GHMP kinase family. GalK subfamily.

The protein localises to the cytoplasm. The catalysed reaction is alpha-D-galactose + ATP = alpha-D-galactose 1-phosphate + ADP + H(+). Its pathway is carbohydrate metabolism; galactose metabolism. Catalyzes the transfer of the gamma-phosphate of ATP to D-galactose to form alpha-D-galactose-1-phosphate (Gal-1-P). The protein is Galactokinase of Yersinia enterocolitica serotype O:8 / biotype 1B (strain NCTC 13174 / 8081).